The following is a 383-amino-acid chain: Putative F-box protein At1g77650 (383 aa).

The F-box domain maps to 1-47 (MAFLSLPSDVVEEFLFKTPIESLVLCKPTCKQLYALCNDKRFIYNHL).

The protein is Putative F-box protein At1g77650 of Arabidopsis thaliana (Mouse-ear cress).